We begin with the raw amino-acid sequence, 423 residues long: Glutamate-1-semialdehyde 2,1-aminomutase (423 aa).

Residue lysine 266 is modified to N6-(pyridoxal phosphate)lysine.

The protein belongs to the class-III pyridoxal-phosphate-dependent aminotransferase family. HemL subfamily. Homodimer. Requires pyridoxal 5'-phosphate as cofactor.

The protein localises to the cytoplasm. It catalyses the reaction (S)-4-amino-5-oxopentanoate = 5-aminolevulinate. It participates in porphyrin-containing compound metabolism; protoporphyrin-IX biosynthesis; 5-aminolevulinate from L-glutamyl-tRNA(Glu): step 2/2. The chain is Glutamate-1-semialdehyde 2,1-aminomutase from Nitratidesulfovibrio vulgaris (strain ATCC 29579 / DSM 644 / CCUG 34227 / NCIMB 8303 / VKM B-1760 / Hildenborough) (Desulfovibrio vulgaris).